A 197-amino-acid chain; its full sequence is Rac-like GTP-binding protein ARAC11 (197 aa).

13-20 (GDGAVGKT) provides a ligand contact to GTP. Positions 35–43 (YVPTVFDNF) match the Effector region motif. GTP contacts are provided by residues 60 to 64 (DTAGQ) and 118 to 121 (TKLD). A Cysteine methyl ester modification is found at C194. A lipid anchor (S-geranylgeranyl cysteine) is attached at C194. Positions 195–197 (SIL) are cleaved as a propeptide — removed in mature form.

The protein belongs to the small GTPase superfamily. Rho family. Part of a complex containing ROPGEF1 and PRK2. Interacts with UGT1, ICR1, ICR2, ICR3, ICR4 and ICR5. Interacts with PHIP1 when activated by GTP. As to expression, exclusively expressed in mature pollen and pollen tubes.

The protein localises to the cytoplasm. Its subcellular location is the membrane. The catalysed reaction is GTP + H2O = GDP + phosphate + H(+). May be involved in cell polarity control during the actin-dependent tip growth of pollen tubes. May regulate callose synthase 1 (CALS1) activity through the interaction with UGT1. Functionally, inactive GDP-bound Rho GTPases reside in the cytosol, are found in a complex with Rho GDP-dissociation inhibitors (Rho GDIs), and are released from the GDI protein in order to translocate to membranes upon activation. This Arabidopsis thaliana (Mouse-ear cress) protein is Rac-like GTP-binding protein ARAC11.